The primary structure comprises 501 residues: Glycogen synthase 1 (501 aa).

K18 contacts ADP-alpha-D-glucose.

Belongs to the glycosyltransferase 1 family. Bacterial/plant glycogen synthase subfamily.

It catalyses the reaction [(1-&gt;4)-alpha-D-glucosyl](n) + ADP-alpha-D-glucose = [(1-&gt;4)-alpha-D-glucosyl](n+1) + ADP + H(+). The protein operates within glycan biosynthesis; glycogen biosynthesis. In terms of biological role, synthesizes alpha-1,4-glucan chains using ADP-glucose. The polypeptide is Glycogen synthase 1 (Geobacter sulfurreducens (strain ATCC 51573 / DSM 12127 / PCA)).